Consider the following 229-residue polypeptide: Clathrin light chain (229 aa).

Disordered stretches follow at residues 1–24 (MSQF…DSKN) and 76–132 (EMQA…KLRE). Over residues 107-132 (EPVRKWKEDQMKRIQERDESSKKLRE) the composition is skewed to basic and acidic residues. Ser229 is modified (phosphoserine).

It belongs to the clathrin light chain family. As to quaternary structure, clathrin coats are formed from molecules containing 3 heavy chains and 3 light chains.

The protein resides in the cytoplasmic vesicle membrane. Its subcellular location is the membrane. It localises to the coated pit. Functionally, clathrin is the major protein of the polyhedral coat of coated pits and vesicles. The chain is Clathrin light chain (clc1) from Schizosaccharomyces pombe (strain 972 / ATCC 24843) (Fission yeast).